The chain runs to 297 residues: Mitochondrial thiamine pyrophosphate carrier 1 (297 aa).

Solcar repeat units follow at residues 13–94, 102–195, and 196–295; these read SHVF…TNAA, PPTI…IRAR, and WPET…LMRV. Helical transmembrane passes span 19–36, 75–91, 109–128, 163–187, 203–219, and 270–287; these read LVSG…IAPL, IMYI…YSYT, LAGA…FDVL, GLGG…AMFG, TAGA…TFPL, and GIGL…INLW.

Belongs to the mitochondrial carrier (TC 2.A.29) family.

The protein resides in the mitochondrion inner membrane. Mitochondrial transporter that mediates uptake of thiamine pyrophosphate (ThPP) into mitochondria. The protein is Mitochondrial thiamine pyrophosphate carrier 1 (TPC1) of Vanderwaltozyma polyspora (strain ATCC 22028 / DSM 70294 / BCRC 21397 / CBS 2163 / NBRC 10782 / NRRL Y-8283 / UCD 57-17) (Kluyveromyces polysporus).